The following is a 242-amino-acid chain: MTMATPFSGAANSIVAARTVLITGVSKGLGRALALELAKRGHTVIGCARSQEKLTALQSELSSSTNHLLLTADVKSNSSVEEMAHTIVEKKGVPDIIVNNAGTINKNSKIWEVSAEDFDNVMDTNVKGVANVLRHFIPLMLPRKQGIIVNMSSGWGRSGAALVAPYCASKWAIEGLSRAVAKEVVEGMAVVALNPGVINTELLTSCFGNSASLYQAPDAWAVKAATMILNLTAGDNGGSLTV.

N-acetylthreonine is present on Thr-2. NADP(+) is bound at residue 21 to 50 (LITGVSKGLGRALALELAKRGHTVIGCARS). Substrate is bound at residue Ser-153. Tyr-166 (proton acceptor) is an active-site residue. Lys-170 contributes to the NADP(+) binding site.

The protein belongs to the short-chain dehydrogenases/reductases (SDR) family. Homodimer. As to expression, mostly expressed in seeds, and, to a lower extent, in roots, leaves, flowers and siliques.

It localises to the cytoplasm. Functionally, NADPH-dependent pterin aldehyde reductase involved in pterin aldehyde salvage during folate turnover. Catalyzes the reduction of diverse aromatic and aliphatic aldehydes (e.g. acetaldehyde, n-propanal, 1-naphthaldehyde, benzaldehyde, cinnamaldehyde, n-butanal, n-hexanal, n-pentanal, 2-naphthaldehyde, n-octanal, n-nonanal and n-heptanal), in addition to the conversion of pterin-6-aldehyde (PtCHO) to 6-hydroxymethylpterin (PtCH(2)OH), and the conversion of dihydropterin-6-aldehyde (H(2)PtCHO) to 6-hydroxymethyldihydropterin (H(2)PtCH(2)OH). Cannot reduce the pterin ring. This chain is NADPH-dependent pterin aldehyde reductase, found in Arabidopsis thaliana (Mouse-ear cress).